The primary structure comprises 254 residues: Imidazole glycerol phosphate synthase subunit HisF (254 aa).

Active-site residues include D11 and D130.

It belongs to the HisA/HisF family. In terms of assembly, heterodimer of HisH and HisF.

Its subcellular location is the cytoplasm. The catalysed reaction is 5-[(5-phospho-1-deoxy-D-ribulos-1-ylimino)methylamino]-1-(5-phospho-beta-D-ribosyl)imidazole-4-carboxamide + L-glutamine = D-erythro-1-(imidazol-4-yl)glycerol 3-phosphate + 5-amino-1-(5-phospho-beta-D-ribosyl)imidazole-4-carboxamide + L-glutamate + H(+). It participates in amino-acid biosynthesis; L-histidine biosynthesis; L-histidine from 5-phospho-alpha-D-ribose 1-diphosphate: step 5/9. In terms of biological role, IGPS catalyzes the conversion of PRFAR and glutamine to IGP, AICAR and glutamate. The HisF subunit catalyzes the cyclization activity that produces IGP and AICAR from PRFAR using the ammonia provided by the HisH subunit. This chain is Imidazole glycerol phosphate synthase subunit HisF, found in Laribacter hongkongensis (strain HLHK9).